Consider the following 542-residue polypeptide: Tubby-related protein 1 (542 aa).

Residues Met-1 to Asp-289 form a disordered region. A compositionally biased stretch (basic and acidic residues) spans Phe-91–Glu-104. Residues Ala-114–Ala-132 show a composition bias toward acidic residues. The span at Pro-146–Glu-157 shows a compositional bias: basic and acidic residues. Residues Ser-262–Lys-275 show a composition bias toward basic residues.

The protein belongs to the TUB family. Homodimer. May interact with ABCF1, PSIP1, ZEB1 and HMGB2 (Potential). Interacts with DNM1. Interacts with F-actin. Interacts with TUB. Interacts with TYRO3. In terms of tissue distribution, retina-specific.

It localises to the cytoplasm. The protein resides in the cell membrane. Its subcellular location is the secreted. The protein localises to the synapse. Required for normal development of photoreceptor synapses. Required for normal photoreceptor function and for long-term survival of photoreceptor cells. Interacts with cytoskeleton proteins and may play a role in protein transport in photoreceptor cells. Binds lipids, especially phosphatidylinositol 3-phosphate, phosphatidylinositol 4-phosphate, phosphatidylinositol 5-phosphate, phosphatidylinositol 3,4-bisphosphate, phosphatidylinositol 4,5-bisphosphate, phosphatidylinositol 3,4,5-bisphosphate, phosphatidylserine and phosphatidic acid (in vitro). Contribute to stimulation of phagocytosis of apoptotic retinal pigment epithelium (RPE) cells and macrophages. The polypeptide is Tubby-related protein 1 (TULP1) (Homo sapiens (Human)).